A 906-amino-acid chain; its full sequence is Protein translocase subunit SecA (906 aa).

Residues Gln-86, 104-108, and Asp-499 each bind ATP; that span reads GEGKT. A disordered region spans residues 862 to 885; the sequence is KPVVSRIDPKDRNPDDPTSWGRVS. Zn(2+) is bound by residues Cys-890, Cys-892, Cys-901, and His-902.

Belongs to the SecA family. As to quaternary structure, monomer and homodimer. Part of the essential Sec protein translocation apparatus which comprises SecA, SecYEG and auxiliary proteins SecDF-YajC and YidC. Zn(2+) serves as cofactor.

It is found in the cell inner membrane. Its subcellular location is the cytoplasm. The catalysed reaction is ATP + H2O + cellular proteinSide 1 = ADP + phosphate + cellular proteinSide 2.. Part of the Sec protein translocase complex. Interacts with the SecYEG preprotein conducting channel. Has a central role in coupling the hydrolysis of ATP to the transfer of proteins into and across the cell membrane, serving both as a receptor for the preprotein-SecB complex and as an ATP-driven molecular motor driving the stepwise translocation of polypeptide chains across the membrane. The polypeptide is Protein translocase subunit SecA (Rickettsia massiliae (strain Mtu5)).